The sequence spans 891 residues: DNA mismatch repair protein MutS (891 aa).

An ATP-binding site is contributed by Gly-634–Ser-641.

The protein belongs to the DNA mismatch repair MutS family.

This protein is involved in the repair of mismatches in DNA. It is possible that it carries out the mismatch recognition step. This protein has a weak ATPase activity. The protein is DNA mismatch repair protein MutS of Burkholderia pseudomallei (strain 668).